The chain runs to 403 residues: tRNA pseudouridine synthase D (403 aa).

The segment covering 1–10 (MTVQVQDHDI) has biased composition (basic and acidic residues). The interval 1-24 (MTVQVQDHDITTAADTAKLPQPMQ) is disordered. Aspartate 92 serves as the catalytic Nucleophile. Positions 192–354 (GVPNYFGPQR…IKAQRRALRL (163 aa)) constitute a TRUD domain. The disordered stretch occupies residues 217-240 (ARPVPESRPQPNKGKRKRVPREQN).

Belongs to the pseudouridine synthase TruD family.

It catalyses the reaction uridine(13) in tRNA = pseudouridine(13) in tRNA. Responsible for synthesis of pseudouridine from uracil-13 in transfer RNAs. This Psychrobacter arcticus (strain DSM 17307 / VKM B-2377 / 273-4) protein is tRNA pseudouridine synthase D.